We begin with the raw amino-acid sequence, 460 residues long: Bifunctional protein GlmU (460 aa).

The pyrophosphorylase stretch occupies residues M1–R229. UDP-N-acetyl-alpha-D-glucosamine-binding positions include L8–G11, K22, Q72, and G77–T78. D102 serves as a coordination point for Mg(2+). UDP-N-acetyl-alpha-D-glucosamine is bound by residues G139, E154, N169, and N227. Mg(2+) is bound at residue N227. A linker region spans residues L230–N250. The N-acetyltransferase stretch occupies residues G251–Q460. Positions 332 and 350 each coordinate UDP-N-acetyl-alpha-D-glucosamine. H362 functions as the Proton acceptor in the catalytic mechanism. Y365 and N376 together coordinate UDP-N-acetyl-alpha-D-glucosamine. Acetyl-CoA contacts are provided by residues A379, N385–Y386, S404, A422, and R439.

This sequence in the N-terminal section; belongs to the N-acetylglucosamine-1-phosphate uridyltransferase family. It in the C-terminal section; belongs to the transferase hexapeptide repeat family. Homotrimer. Requires Mg(2+) as cofactor.

The protein localises to the cytoplasm. It catalyses the reaction alpha-D-glucosamine 1-phosphate + acetyl-CoA = N-acetyl-alpha-D-glucosamine 1-phosphate + CoA + H(+). The enzyme catalyses N-acetyl-alpha-D-glucosamine 1-phosphate + UTP + H(+) = UDP-N-acetyl-alpha-D-glucosamine + diphosphate. It participates in nucleotide-sugar biosynthesis; UDP-N-acetyl-alpha-D-glucosamine biosynthesis; N-acetyl-alpha-D-glucosamine 1-phosphate from alpha-D-glucosamine 6-phosphate (route II): step 2/2. It functions in the pathway nucleotide-sugar biosynthesis; UDP-N-acetyl-alpha-D-glucosamine biosynthesis; UDP-N-acetyl-alpha-D-glucosamine from N-acetyl-alpha-D-glucosamine 1-phosphate: step 1/1. Its pathway is bacterial outer membrane biogenesis; LPS lipid A biosynthesis. Functionally, catalyzes the last two sequential reactions in the de novo biosynthetic pathway for UDP-N-acetylglucosamine (UDP-GlcNAc). The C-terminal domain catalyzes the transfer of acetyl group from acetyl coenzyme A to glucosamine-1-phosphate (GlcN-1-P) to produce N-acetylglucosamine-1-phosphate (GlcNAc-1-P), which is converted into UDP-GlcNAc by the transfer of uridine 5-monophosphate (from uridine 5-triphosphate), a reaction catalyzed by the N-terminal domain. This Streptococcus equi subsp. zooepidemicus (strain ATCC 35246 / C74-63) protein is Bifunctional protein GlmU.